Consider the following 261-residue polypeptide: DNA repair protein RecO (261 aa).

Belongs to the RecO family.

Functionally, involved in DNA repair and RecF pathway recombination. This chain is DNA repair protein RecO, found in Mycobacteroides abscessus (strain ATCC 19977 / DSM 44196 / CCUG 20993 / CIP 104536 / JCM 13569 / NCTC 13031 / TMC 1543 / L948) (Mycobacterium abscessus).